The sequence spans 1155 residues: MHC class II transactivator (1155 aa).

A required for acetyltransferase activity region spans residues 171–210 (AYANIAELDQYVFQDTQLEGLSKDLFIEHIGAEEGFGENI). Disordered regions lie at residues 217–237 (GQKPQKRRFPEEHAMDSKHRK) and 297–357 (SLSI…IKLP). Basic and acidic residues predominate over residues 224-233 (RFPEEHAMDS). Residues 439 to 749 (QVVAVLGKAG…CFLGAVWLAQ (311 aa)) form the NACHT domain. A GTP-binding site is contributed by 445–452 (GKAGQGKS). LRR repeat units follow at residues 1010 to 1033 (SLQHLDLDSLSENKIGDKGVSKLS), 1041 to 1062 (ALETLNLSQNNITDVGACKLAE), 1070 to 1091 (SLLRLSLYNNCICDKGAKSLAQ), and 1098 to 1119 (SLRVMDVQFNKFTAAGAQQLAS).

In terms of assembly, interacts with ZXDA and ZXDC. Interacts with PML (isoform PML-2). Interacts with TAF7; interaction inhibits CIITA acetyltransferase activity, thereby repressing transcription. In terms of processing, autophosphorylated, affecting interaction with TAF7. In terms of tissue distribution, expressed at very high levels in dendritic cells, at very low levels in spleen and thymus and is not detected in other tissues. Detected at high levels in spleen and tonsil as well as in a number of B-lymphocyte cell lines, and at very low levels in dendritic cells.

The protein localises to the nucleus. It localises to the PML body. It carries out the reaction L-seryl-[protein] + ATP = O-phospho-L-seryl-[protein] + ADP + H(+). The catalysed reaction is L-threonyl-[protein] + ATP = O-phospho-L-threonyl-[protein] + ADP + H(+). Essential for transcriptional activity of the HLA class II promoter; activation is via the proximal promoter. Does not bind DNA. May act in a coactivator-like fashion through protein-protein interactions by contacting factors binding to the proximal MHC class II promoter, to elements of the transcription machinery, or both. Alternatively it may activate HLA class II transcription by modifying proteins that bind to the MHC class II promoter. Also mediates enhanced MHC class I transcription, the promoter element requirements for CIITA-mediated transcription are distinct from those of constitutive MHC class I transcription, and CIITA can functionally replace TAF1 at these genes. Activates CD74 transcription. Exhibits intrinsic GTP-stimulated acetyltransferase activity. Exhibits serine/threonine protein kinase activity: phosphorylates the TFIID component TAF7, the RAP74 subunit of the general transcription factor TFIIF, histone H2B at 'Ser-37' and other histones. This Mus musculus (Mouse) protein is MHC class II transactivator.